The chain runs to 80 residues: Cytochrome c oxidase subunit 7B, mitochondrial (80 aa).

A mitochondrion-targeting transit peptide spans 1–24; it reads MLPLAKNALSRLQVRSIQQVVARQ. At 25-39 the chain is on the mitochondrial matrix side; that stretch reads SHQKRAPSFHDKYGN. The helical transmembrane segment at 40–60 threads the bilayer; the sequence is AILAGGAIFCVSTWTYTATQI. Topologically, residues 61-80 are mitochondrial intermembrane; it reads GIEWNMSPVGRVTPKEWRDQ.

Belongs to the cytochrome c oxidase VIIb family. As to quaternary structure, component of the cytochrome c oxidase (complex IV, CIV), a multisubunit enzyme composed of 14 subunits. The complex is composed of a catalytic core of 3 subunits MT-CO1, MT-CO2 and MT-CO3, encoded in the mitochondrial DNA, and 11 supernumerary subunits COX4I, COX5A, COX5B, COX6A, COX6B, COX6C, COX7A, COX7B, COX7C, COX8 and NDUFA4, which are encoded in the nuclear genome. The complex exists as a monomer or a dimer and forms supercomplexes (SCs) in the inner mitochondrial membrane with NADH-ubiquinone oxidoreductase (complex I, CI) and ubiquinol-cytochrome c oxidoreductase (cytochrome b-c1 complex, complex III, CIII), resulting in different assemblies (supercomplex SCI(1)III(2)IV(1) and megacomplex MCI(2)III(2)IV(2)).

The protein resides in the mitochondrion inner membrane. It participates in energy metabolism; oxidative phosphorylation. Its function is as follows. Component of the cytochrome c oxidase, the last enzyme in the mitochondrial electron transport chain which drives oxidative phosphorylation. The respiratory chain contains 3 multisubunit complexes succinate dehydrogenase (complex II, CII), ubiquinol-cytochrome c oxidoreductase (cytochrome b-c1 complex, complex III, CIII) and cytochrome c oxidase (complex IV, CIV), that cooperate to transfer electrons derived from NADH and succinate to molecular oxygen, creating an electrochemical gradient over the inner membrane that drives transmembrane transport and the ATP synthase. Cytochrome c oxidase is the component of the respiratory chain that catalyzes the reduction of oxygen to water. Electrons originating from reduced cytochrome c in the intermembrane space (IMS) are transferred via the dinuclear copper A center (CU(A)) of subunit 2 and heme A of subunit 1 to the active site in subunit 1, a binuclear center (BNC) formed by heme A3 and copper B (CU(B)). The BNC reduces molecular oxygen to 2 water molecules using 4 electrons from cytochrome c in the IMS and 4 protons from the mitochondrial matrix. Plays a role in proper central nervous system (CNS) development in vertebrates. The sequence is that of Cytochrome c oxidase subunit 7B, mitochondrial (Cox7b) from Mus musculus (Mouse).